The primary structure comprises 156 residues: Small ribosomal subunit protein uS7c (156 aa).

This sequence belongs to the universal ribosomal protein uS7 family. Part of the 30S ribosomal subunit.

The protein localises to the plastid. It localises to the chloroplast. In terms of biological role, one of the primary rRNA binding proteins, it binds directly to 16S rRNA where it nucleates assembly of the head domain of the 30S subunit. This is Small ribosomal subunit protein uS7c (rps7) from Rhodomonas salina (Cryptomonas salina).